We begin with the raw amino-acid sequence, 304 residues long: Pseudouridine-5'-phosphate glycosidase (304 aa).

The Proton donor role is filled by glutamate 25. Substrate-binding residues include lysine 88 and valine 108. A Mn(2+)-binding site is contributed by aspartate 140. A substrate-binding site is contributed by 142–144; the sequence is SAD. Lysine 161 functions as the Nucleophile in the catalytic mechanism.

The protein belongs to the pseudouridine-5'-phosphate glycosidase family. In terms of assembly, homotrimer. The cofactor is Mn(2+).

The enzyme catalyses D-ribose 5-phosphate + uracil = psi-UMP + H2O. In terms of biological role, catalyzes the reversible cleavage of pseudouridine 5'-phosphate (PsiMP) to ribose 5-phosphate and uracil. Functions biologically in the cleavage direction, as part of a pseudouridine degradation pathway. This chain is Pseudouridine-5'-phosphate glycosidase, found in Paracoccus denitrificans (strain Pd 1222).